The following is a 156-amino-acid chain: MSTSRLYTLVLVLQPQRVLLGMKKRGFGAGRWNGFGGKVQEGETIEDGAKRELLEESGLSVDTLHKVGHISFEFVGSPELMDVHIFSADHVHGTPTESEEMRPQWFQLDQIPFADLWPDDSYWFPLLLQKKKFCGHFKFQDQDTILSYSLREVDSF.

The Nudix hydrolase domain maps to 3–132 (TSRLYTLVLV…WFPLLLQKKK (130 aa)). Threonine 8 contributes to the 2-oxo-dATP binding site. Residues threonine 8, lysine 23, asparagine 33, 35–38 (FGGK), and glutamate 52 contribute to the 8-oxo-dGTP site. Residues asparagine 33 and 35–38 (FGGK) contribute to the 2-oxo-dATP site. The Mg(2+) site is built by glycine 36, glutamate 52, glutamate 55, glutamate 56, and glutamate 100. A Nudix box motif is present at residues 37-58 (GKVQEGETIEDGAKRELLEESG). 8-oxo-dGTP is bound by residues glutamate 56, glutamate 100, and 117–120 (WPDD). 117–120 (WPDD) lines the 2-oxo-dATP pocket.

Belongs to the Nudix hydrolase family. In terms of assembly, monomer. The cofactor is Mg(2+). As to expression, high expression levels detected in thymus, liver, spleen, kidney, testis and large intestine, with lower levels detected in brain, heart, lung and stomach (at protein level). Expressed in kidney, liver and small intestine.

Its subcellular location is the cytoplasm. It is found in the nucleus. It localises to the nucleus membrane. The protein resides in the cytoplasmic vesicle. The protein localises to the secretory vesicle. Its subcellular location is the acrosome. It catalyses the reaction 2-oxo-dATP + H2O = 2-oxo-dAMP + diphosphate + H(+). The catalysed reaction is 2-oxo-ATP + H2O = 2-oxo-AMP + diphosphate + H(+). The enzyme catalyses 8-oxo-dGTP + H2O = 8-oxo-dGMP + diphosphate + H(+). It carries out the reaction 8-oxo-dATP + H2O = 8-oxo-dAMP + diphosphate + H(+). It catalyses the reaction O(6)-methyl-dGTP + H2O = O(6)-methyl-dGMP + diphosphate + H(+). The catalysed reaction is N(6)-methyl-dATP + H2O = N(6)-methyl-dAMP + diphosphate + H(+). The enzyme catalyses N(6)-methyl-ATP + H2O = N(6)-methyl-AMP + diphosphate + H(+). In terms of biological role, oxidized purine nucleoside triphosphate hydrolase which is a prominent sanitizer of the oxidized nucleotide pool. Catalyzes the hydrolysis of 2-oxo-dATP (2-hydroxy-dATP) into 2-oxo-dAMP. Also has a significant hydrolase activity toward 2-oxo-ATP, 8-oxo-dGTP and 8-oxo-dATP. Through the hydrolysis of oxidized purine nucleoside triphosphates, prevents their incorporation into DNA and the subsequent transversions A:T to C:G and G:C to T:A. Also catalyzes the hydrolysis of methylated purine nucleoside triphosphate preventing their integration into DNA. Through this antimutagenic activity protects cells from oxidative stress. The protein is Oxidized purine nucleoside triphosphate hydrolase (Nudt1) of Mus musculus (Mouse).